Consider the following 371-residue polypeptide: GDP-mannose 3,5-epimerase 2 (371 aa).

NAD(+) contacts are provided by residues 29 to 55 (GAGG…SDWK), D53, and D73. Residues G98 and 138–140 (SAC) contribute to the substrate site. The NAD(+) site is built by Y168 and K172. Residue Y168 is the Proton acceptor of the active site. Substrate-binding positions include N197, 210-212 (EKA), K219, 235-237 (QTR), R300, and S350.

The protein belongs to the NAD(P)-dependent epimerase/dehydratase family. The cofactor is NAD(+).

The catalysed reaction is GDP-alpha-D-mannose = GDP-beta-L-gulose. It carries out the reaction GDP-beta-L-gulose = GDP-beta-L-galactose. Its pathway is cofactor biosynthesis; L-ascorbate biosynthesis via GDP-alpha-D-mannose pathway; L-ascorbate from GDP-alpha-D-mannose: step 1/5. In terms of biological role, catalyzes a reversible epimerization of GDP-D-mannose that precedes the committed step in the biosynthesis of vitamin C (L-ascorbate), resulting in the hydrolysis of the highly energetic glycosyl-pyrophosphoryl linkage. Able to catalyze 2 distinct epimerization reactions and can release both GDP-L-galactose and GDP-L-gulose from GDP-mannose. The polypeptide is GDP-mannose 3,5-epimerase 2 (GME-2) (Oryza sativa subsp. japonica (Rice)).